Reading from the N-terminus, the 330-residue chain is Aspartate--ammonia ligase (330 aa).

This sequence belongs to the class-II aminoacyl-tRNA synthetase family. AsnA subfamily.

Its subcellular location is the cytoplasm. The catalysed reaction is L-aspartate + NH4(+) + ATP = L-asparagine + AMP + diphosphate + H(+). It functions in the pathway amino-acid biosynthesis; L-asparagine biosynthesis; L-asparagine from L-aspartate (ammonia route): step 1/1. The sequence is that of Aspartate--ammonia ligase from Pectobacterium carotovorum subsp. carotovorum (strain PC1).